We begin with the raw amino-acid sequence, 86 residues long: Long neurotoxin homolog (86 aa).

Positions 1 to 21 (MKTLLLTLVVVTIVCLALGYT) are cleaved as a signal peptide. 5 disulfides stabilise this stretch: C24-C45, C27-C32, C38-C63, C67-C78, and C79-C84.

The protein belongs to the three-finger toxin family. Ancestral subfamily. Orphan group II sub-subfamily. As to expression, expressed by the venom gland.

The protein localises to the secreted. Binds with low affinity and weakly inhibits muscle nicotinic acetylcholine receptor (nAChR). This is Long neurotoxin homolog from Naja atra (Chinese cobra).